Consider the following 502-residue polypeptide: Type II secretion system protein E (502 aa).

263–270 contributes to the ATP binding site; sequence GPTGSGKT. Zn(2+) contacts are provided by Cys396, Cys399, Cys429, and Cys432. Positions 461 to 480 are disordered; it reads SSEQEMTRHARTSGPSIRDD.

Belongs to the GSP E family. In terms of assembly, homodimer. Dimerization is directed by a relatively short domain near the extreme N-terminus and is essential for extracellular protein secretion. May form homooligomers. Interacts with XcpY/GspL. Forms an inner membrane platform subcomplex with XcpS/GspF, XcpY/GspL and XcpZ/GspM. The cofactor is Zn(2+).

Its subcellular location is the cell inner membrane. The catalysed reaction is ATP + H2O + cellular proteinSide 1 = ADP + phosphate + cellular proteinSide 2.. ATPase component of the type II secretion system required for the energy-dependent secretion of extracellular factors such as proteases and toxins from the periplasm. Acts as a molecular motor to provide the energy that is required for assembly of the pseudopilus and the extrusion of substrates generated in the cytoplasm. The sequence is that of Type II secretion system protein E (xcpR) from Pseudomonas aeruginosa (strain ATCC 15692 / DSM 22644 / CIP 104116 / JCM 14847 / LMG 12228 / 1C / PRS 101 / PAO1).